Reading from the N-terminus, the 481-residue chain is Phosphoglucosamine mutase (481 aa).

Serine 129 serves as the catalytic Phosphoserine intermediate. The Mg(2+) site is built by serine 129, aspartate 271, aspartate 273, and aspartate 275. Serine 129 is subject to Phosphoserine.

It belongs to the phosphohexose mutase family. Requires Mg(2+) as cofactor. Activated by phosphorylation.

The catalysed reaction is alpha-D-glucosamine 1-phosphate = D-glucosamine 6-phosphate. Its function is as follows. Catalyzes the conversion of glucosamine-6-phosphate to glucosamine-1-phosphate. The chain is Phosphoglucosamine mutase from Picosynechococcus sp. (strain ATCC 27264 / PCC 7002 / PR-6) (Agmenellum quadruplicatum).